The sequence spans 1097 residues: RecBCD enzyme subunit RecC (1097 aa).

Belongs to the RecC family. In terms of assembly, heterotrimer of RecB, RecC and RecD. All subunits contribute to DNA-binding.

Its function is as follows. A helicase/nuclease that prepares dsDNA breaks (DSB) for recombinational DNA repair. Binds to DSBs and unwinds DNA via a highly rapid and processive ATP-dependent bidirectional helicase activity. Holoenzyme degrades any linearized DNA that is unable to undergo homologous recombination. In the holoenzyme this subunit recognizes the wild-type Chi sequence, and when added to isolated RecB increases its ATP-dependent helicase processivity. Unlike the case in E.coli, suppresses RecA-dependent homologous recombination, is instead required for single-strand annealing pathway repair of DSB. In Mycobacterium tuberculosis (strain CDC 1551 / Oshkosh), this protein is RecBCD enzyme subunit RecC.